We begin with the raw amino-acid sequence, 612 residues long: Zinc metalloproteinase-disintegrin-like 2a (612 aa).

The signal sequence occupies residues 1-20 (MIQVLLVTICLAVFPYQGSS). The propeptide occupies 21–189 (IILGSGNVND…KKASQLNLTP (169 aa)). In terms of domain architecture, Peptidase M12B spans 199–395 (KYIELVIVAD…NRPPCILNKP (197 aa)). Glu202 contributes to the Ca(2+) binding site. An N-linked (GlcNAc...) asparagine glycan is attached at Asn218. Ca(2+) is bound at residue Asp286. Disulfide bonds link Cys310-Cys390, Cys350-Cys374, and Cys352-Cys357. Residue His335 participates in Zn(2+) binding. The active site involves Glu336. Zn(2+) contacts are provided by His339 and His345. Cys390, Asn393, Val405, Asn408, Phe410, Glu412, Glu415, and Asp418 together coordinate Ca(2+). The Disintegrin domain occupies 403–489 (PPVCGNYFVE…DCPTDNFQRN (87 aa)). Disulfide bonds link Cys406/Cys435, Cys417/Cys430, Cys419/Cys425, Cys429/Cys452, Cys443/Cys449, Cys448/Cys474, Cys461/Cys481, Cys468/Cys500, Cys493/Cys505, Cys512/Cys562, Cys527/Cys573, Cys540/Cys550, Cys557/Cys599, and Cys593/Cys605. Residues 467 to 469 (ECD) carry the D/ECD-tripeptide motif.

It belongs to the venom metalloproteinase (M12B) family. P-III subfamily. The cofactor is Zn(2+). As to expression, expressed by the venom gland.

Its subcellular location is the secreted. In terms of biological role, snake venom metalloproteinase that impairs hemostasis in the envenomed animal. The chain is Zinc metalloproteinase-disintegrin-like 2a from Crotalus adamanteus (Eastern diamondback rattlesnake).